The chain runs to 346 residues: UDP-N-acetylenolpyruvoylglucosamine reductase (346 aa).

One can recognise an FAD-binding PCMH-type domain in the interval 17 to 187 (IESQAYALIE…VAVGFTLKKE (171 aa)). Residue Arg163 is part of the active site. The Proton donor role is filled by Ser233. The active site involves Glu329.

Belongs to the MurB family. Requires FAD as cofactor.

It is found in the cytoplasm. The catalysed reaction is UDP-N-acetyl-alpha-D-muramate + NADP(+) = UDP-N-acetyl-3-O-(1-carboxyvinyl)-alpha-D-glucosamine + NADPH + H(+). It functions in the pathway cell wall biogenesis; peptidoglycan biosynthesis. In terms of biological role, cell wall formation. This is UDP-N-acetylenolpyruvoylglucosamine reductase from Photobacterium profundum (strain SS9).